Consider the following 263-residue polypeptide: Kallikrein 1-related peptidase b27 (263 aa).

Residues 1-17 (MRFLILFLALSLGGIDA) form the signal peptide. Positions 18 to 24 (APPVQSR) are cleaved as a propeptide — activation peptide. The 236-residue stretch at 25-260 (IIGGFKCKKN…FTSWIKDTMA (236 aa)) folds into the Peptidase S1 domain. Cystine bridges form between C31–C175, C50–C66, C154–C221, C186–C200, and C211–C236. Residue H65 is the Charge relay system of the active site. N69 and N105 each carry an N-linked (GlcNAc...) asparagine glycan. D122 (charge relay system) is an active-site residue. S215 serves as the catalytic Charge relay system.

The protein belongs to the peptidase S1 family. Kallikrein subfamily. In terms of tissue distribution, expressed in testis and submaxillary gland. Not expressed in heart, brain, spleen, lung, liver, muscle, kidney and ovary. In the testis, expression localized specifically to Leydig cells in the interstitial tissues.

Its activity is regulated as follows. Strongly inhibited by protease inhibitors diisopropyl fluorophosphate, phenylmethanesulfonyl fluoride and SBTI. Serine protease with chymotrypsin-like cleavage specificity. Shows activity towards casein, gelatin, IGFBP3 and fibronectin but not towards laminin or collagens I and IV. Does not hydrolyze kininogin to release Lys-bradykinin. The chain is Kallikrein 1-related peptidase b27 (Klk1b27) from Mus musculus (Mouse).